The chain runs to 124 residues: V-type proton ATPase subunit F 1 (124 aa).

Ser-87 is modified (phosphoserine).

The protein belongs to the V-ATPase F subunit family. In terms of assembly, V-ATPase is a heteromultimeric enzyme made up of two complexes: the ATP-hydrolytic V1 complex and the proton translocation V0 complex. The V1 complex consists of three catalytic AB heterodimers that form a heterohexamer, three peripheral stalks each consisting of EG heterodimers, one central rotor including subunits D and F, and the regulatory subunits C and H. The proton translocation complex V0 consists of the proton transport subunit a, a ring of proteolipid subunits c9c'', rotary subunit d, subunits e and f, and the accessory subunits VhaAC45 and ATP6AP2.

In terms of biological role, subunit of the V1 complex of vacuolar(H+)-ATPase (V-ATPase), a multisubunit enzyme composed of a peripheral complex (V1) that hydrolyzes ATP and a membrane integral complex (V0) that translocates protons. V-ATPase is responsible for acidifying and maintaining the pH of intracellular compartments and in some cell types, is targeted to the plasma membrane, where it is responsible for acidifying the extracellular environment. The chain is V-type proton ATPase subunit F 1 (Vha14-1) from Drosophila melanogaster (Fruit fly).